The chain runs to 255 residues: uncharacterized protein (255 aa).

The first 22 residues, 1 to 22 (MNILSPIIIIIILIVLFYVMRM), serve as a signal peptide directing secretion.

This is an uncharacterized protein from Acanthamoeba polyphaga (Amoeba).